Reading from the N-terminus, the 250-residue chain is MSPAPPPSRGRIRPWLVVGDLVVAAMWVCAGALVKLAVYGVLGLGGRPEADAVKVALSLVYMFFFAWLEGFTGGASYNPLTVLAGALASRAGPSLYLFAAFVRMPAQVFGSILGVKLIRAALPKVGKGAPLSVGVHHGALAEGLATFMVVIVSVTLKKKEMKGFFMKTWISSIWKMTFHLLSSDITGGVMNPASAFAWAYARGDHTTFDHLLVYWLAPLQATLLGVWVVTLLTKPKKIEEEADESKTKKE.

2 helical membrane passes run 14–34 and 55–75; these read PWLVVGDLVVAAMWVCAGALV and VALSLVYMFFFAWLEGFTGGA. The NPA 1 signature appears at 78–80; that stretch reads NPL. The next 4 membrane-spanning stretches (helical) occupy residues 95 to 115, 132 to 152, 178 to 200, and 211 to 231; these read LYLFAAFVRMPAQVFGSILGV, SVGVHHGALAEGLATFMVVIV, FHLLSSDITGGVMNPASAFAWAY, and LLVYWLAPLQATLLGVWVVTL. The short motif at 191-193 is the NPA 2 element; it reads NPA.

Belongs to the MIP/aquaporin (TC 1.A.8) family. SIP (TC 1.A.8.10) subfamily. In terms of tissue distribution, expressed in leaves and anthers, and at lower levels in roots.

It is found in the membrane. Its function is as follows. Aquaporins facilitate the transport of water and small neutral solutes across cell membranes. In Oryza sativa subsp. japonica (Rice), this protein is Aquaporin SIP2-1 (SIP2-1).